The sequence spans 1179 residues: Integrin alpha-E (1179 aa).

The first 18 residues, 1–18, serve as a signal peptide directing secretion; the sequence is MWLFHTLLCIASLALLAA. Topologically, residues 19 to 1124 are extracellular; sequence FNVDVARPWL…VFLKDEKYHS (1106 aa). 2 FG-GAP repeats span residues 22–79 and 80–138; these read DVAR…EILC and HPVE…PQAQ. The N-linked (GlcNAc...) asparagine glycan is linked to Asn-49. 2 disulfides stabilise this stretch: Cys-70/Cys-79 and Cys-126/Cys-159. The segment at 145–199 is X-domain (extra domain); it reads ENLLDPDARVDTGDCYSNKEGGGEDDVNTARQRRALEKEEEEDKEEEEDEEEEEA. The disordered stretch occupies residues 158–200; it reads DCYSNKEGGGEDDVNTARQRRALEKEEEEDKEEEEDEEEEEAG. Over residues 182-200 the composition is skewed to acidic residues; sequence KEEEEDKEEEEDEEEEEAG. The VWFA domain occupies 200 to 389; sequence GTEIAIILDG…SKLRYNIISM (190 aa). 2 N-linked (GlcNAc...) asparagine glycosylation sites follow: Asn-271 and Asn-321. Residues 390–442 form an FG-GAP 3 repeat; sequence EGTVGDALHYQLAQIGFSAQILDERQVLLGAVGAFDWSGGALLYDTRSRRGRF. N-linked (GlcNAc...) asparagine glycosylation is present at Asn-444. FG-GAP repeat units follow at residues 447 to 499, 500 to 560, 563 to 627, and 631 to 691; these read AAAA…GREA, SFLP…DGSF, ARIL…GLSA, and QRIR…FTPS. Ca(2+)-binding residues include Asp-522, Asp-524, Asp-526, Asp-530, Asp-586, Ser-588, Asp-590, Asp-594, Asp-654, Ser-656, Asp-658, and Asp-662. Cys-706 and Cys-762 are joined by a disulfide. 2 N-linked (GlcNAc...) asparagine glycosylation sites follow: Asn-726 and Asn-782. The cysteines at positions 823 and 829 are disulfide-linked. N-linked (GlcNAc...) asparagine glycosylation is present at Asn-857. An intrachain disulfide couples Cys-893 to Cys-907. 2 N-linked (GlcNAc...) asparagine glycosylation sites follow: Asn-934 and Asn-954. 2 cysteine pairs are disulfide-bonded: Cys-1008-Cys-1033 and Cys-1041-Cys-1057. Asn-1065 and Asn-1096 each carry an N-linked (GlcNAc...) asparagine glycan. Residues 1125-1147 form a helical membrane-spanning segment; the sequence is LPIIIKGSVGGLLVLIVILVILF. The Cytoplasmic segment spans residues 1148 to 1179; it reads KCGFFKRKYQQLNLESIRKAQLKSENLLEEEN. The GFFKR motif signature appears at 1150–1154; sequence GFFKR.

This sequence belongs to the integrin alpha chain family. As to quaternary structure, heterodimer of an alpha and a beta subunit. The alpha subunit is composed of a heavy and a light chains linked by a disulfide bond. Alpha-E associates with beta-7. As to expression, expressed on a subclass of T-lymphocytes known as intra-epithelial lymphocytes which are located between mucosal epithelial cells.

The protein localises to the membrane. Its function is as follows. Integrin alpha-E/beta-7 is a receptor for E-cadherin. It mediates adhesion of intra-epithelial T-lymphocytes to epithelial cell monolayers. The sequence is that of Integrin alpha-E (ITGAE) from Homo sapiens (Human).